Consider the following 139-residue polypeptide: Translation initiation factor 2 subunit beta (139 aa).

It belongs to the eIF-2-beta/eIF-5 family. As to quaternary structure, heterotrimer composed of an alpha, a beta and a gamma chain.

In terms of biological role, eIF-2 functions in the early steps of protein synthesis by forming a ternary complex with GTP and initiator tRNA. This is Translation initiation factor 2 subunit beta from Nanoarchaeum equitans (strain Kin4-M).